Reading from the N-terminus, the 283-residue chain is Pre-protein-C8 (283 aa).

The segment at residues 1–40 (MKEDNNTSEESGRINRRNVLKTVGAAGLFAAGSTGMAAAA) is a signal peptide (tat-type signal). Residues 61–75 (ARELAKTPAFRELAQ) are helix-loop-helix (HLH) region.

Immunity protein HalI interacts with Halocin-C8; the interaction is direct. In terms of processing, predicted to be exported by the Tat system. The position of the signal peptide cleavage has not been experimentally proven.

The protein localises to the secreted. Its subcellular location is the cell membrane. Its function is as follows. Has antibacterial activity against a wide variety of haloarchaeons. Causes cell lysis and death, possibly by disrupting the cell wall. Functionally, acts as an immunity protein for halocin-C8. Able to block the halocin-C8 activity by sequestering the activity of halocin-C8 through specific and direct binding. The polypeptide is Pre-protein-C8 (proC8) (Halobacterium sp. (strain AS7092)).